The sequence spans 341 residues: 4-hydroxy-2-oxovalerate aldolase (341 aa).

Residues 9–259 (VRITEVCLRD…KLDIDLYKMM (251 aa)) form the Pyruvate carboxyltransferase domain. 17–18 (RD) contributes to the substrate binding site. Position 18 (Asp-18) interacts with Mn(2+). His-21 functions as the Proton acceptor in the catalytic mechanism. Substrate contacts are provided by Ser-171 and His-198. Mn(2+)-binding residues include His-198 and His-200. Tyr-289 is a substrate binding site.

This sequence belongs to the 4-hydroxy-2-oxovalerate aldolase family.

The catalysed reaction is (S)-4-hydroxy-2-oxopentanoate = acetaldehyde + pyruvate. This is 4-hydroxy-2-oxovalerate aldolase from Bacillus cereus (strain ATCC 10987 / NRS 248).